We begin with the raw amino-acid sequence, 131 residues long: Methylglyoxal synthase (131 aa).

Residues 1 to 131 form the MGS-like domain; the sequence is MKIALIAHDK…GDLDYRKLRK (131 aa). Substrate is bound by residues H8, K12, 34-37, and 54-55; these read TGTT and SG. Catalysis depends on D60, which acts as the Proton donor/acceptor. Position 87 (H87) interacts with substrate.

It belongs to the methylglyoxal synthase family.

The catalysed reaction is dihydroxyacetone phosphate = methylglyoxal + phosphate. Functionally, catalyzes the formation of methylglyoxal from dihydroxyacetone phosphate. The polypeptide is Methylglyoxal synthase (Bacillus mycoides (strain KBAB4) (Bacillus weihenstephanensis)).